A 524-amino-acid polypeptide reads, in one-letter code: Keratin, type II cytoskeletal 71 (524 aa).

The interval 1-130 (MNRQFTCKSG…DPEIQKVRAQ (130 aa)) is head. The tract at residues 131–166 (EREQIKALNNKFASFIDKVRFLEQQNQVLETKWELL) is coil 1A. An IF rod domain is found at 131-444 (EREQIKALNN…KLLESEECRM (314 aa)). The tract at residues 167–185 (QQLDLNNCKNNLEPILEGY) is linker 1. The interval 186–277 (ISNLRKQLET…CLYEAEIAQI (92 aa)) is coil 1B. Residues 278–301 (QSHISDMSVILSMDNNRDLNLDSI) form a linker 12 region. The segment at 302–440 (IDEVRAQYEE…ATYRKLLESE (139 aa)) is coil 2. Residues 441–524 (ECRMSGEFPS…QSASSKKASR (84 aa)) form a tail region. The tract at residues 491 to 524 (VRGGEGRSRGSTSDYKDTLGKGSSQSASSKKASR) is disordered. The span at 494-509 (GEGRSRGSTSDYKDTL) shows a compositional bias: basic and acidic residues. The span at 510–524 (GKGSSQSASSKKASR) shows a compositional bias: low complexity.

It belongs to the intermediate filament family. In terms of assembly, heterodimer of a type I and a type II keratin. Associates with KRT16 and/or KRT17.

Its subcellular location is the cytoplasm. It is found in the cytoskeleton. Functionally, plays a central role in hair formation. Essential component of keratin intermediate filaments in the inner root sheath (IRS) of the hair follicle. This Felis catus (Cat) protein is Keratin, type II cytoskeletal 71 (KRT71).